Here is a 356-residue protein sequence, read N- to C-terminus: MTTPTTAPSGCRSDLDSRYHRLCDLAEGWGIALETLAAVGAVATVACMFALVFLICKVQDSNKRKMLPAQFLFLLGVLGVFGLTFAFIIKLDGATGPTRFFLFGVLFAICFSCLLAHAFNLIKLVRGRKPLSWLVILSLAVGFSLVQDVIAIEYLVLTMNRTNVNVFSELPAPRRNEDFVMLLIYVLVLMVLTFFTSFLVFCGSFSGWKRHGFHICFTSFLSIAIWVAWIVLLLIPDIDRKWDDTILSTALVANGWVFLAFYILPEFRQLPRQRSPTDYPVEDAFCKPQLMKQSYGVENRAYSQEEITQGLEMGDTLYAPYSTHFQLQNHQKDFSIPRAQAPASPYNDYEGRKGDS.

At 1 to 35 (MTTPTTAPSGCRSDLDSRYHRLCDLAEGWGIALET) the chain is on the extracellular side. A helical membrane pass occupies residues 36–56 (LAAVGAVATVACMFALVFLIC). Topologically, residues 57–68 (KVQDSNKRKMLP) are cytoplasmic. Residues 69-89 (AQFLFLLGVLGVFGLTFAFII) form a helical membrane-spanning segment. The Extracellular portion of the chain corresponds to 90-101 (KLDGATGPTRFF). The chain crosses the membrane as a helical span at residues 102 to 122 (LFGVLFAICFSCLLAHAFNLI). At 123–131 (KLVRGRKPL) the chain is on the cytoplasmic side. A helical transmembrane segment spans residues 132-152 (SWLVILSLAVGFSLVQDVIAI). The Extracellular portion of the chain corresponds to 153-178 (EYLVLTMNRTNVNVFSELPAPRRNED). Residue Asn160 is glycosylated (N-linked (GlcNAc...) asparagine). Residues 179–199 (FVMLLIYVLVLMVLTFFTSFL) traverse the membrane as a helical segment. Residues 200–214 (VFCGSFSGWKRHGFH) are Cytoplasmic-facing. A helical membrane pass occupies residues 215 to 235 (ICFTSFLSIAIWVAWIVLLLI). The Extracellular segment spans residues 236–244 (PDIDRKWDD). Residues 245 to 265 (TILSTALVANGWVFLAFYILP) form a helical membrane-spanning segment. Residues 266–356 (EFRQLPRQRS…NDYEGRKGDS (91 aa)) lie on the Cytoplasmic side of the membrane. Residue Ser303 is modified to Phosphoserine. A phosphotyrosine mark is found at Tyr318 and Tyr321. The segment at 336-356 (IPRAQAPASPYNDYEGRKGDS) is disordered. Ser344 carries the phosphoserine modification. 2 positions are modified to phosphotyrosine: Tyr346 and Tyr349.

This sequence belongs to the G-protein coupled receptor 3 family. As to quaternary structure, interacts (via its transmembrane domain) with EGFR. In terms of processing, phosphorylated in two conserved double-tyrosine motifs, Tyr 318/Tyr-321 and Tyr-346/Tyr-349 by EGFR. Tyr-318 and Tyr-321 are the preferred residues responsible for EGFR-mediated GPRC5A phosphorylation. In terms of tissue distribution, expressed predominantly in normal fetal and adult lung. Almost undetectable or expressed at very low levels in other tissues.

The protein localises to the cell membrane. Orphan receptor. Could be involved in modulating differentiation and maintaining homeostasis of epithelial cells. This retinoic acid-inducible GPCR provides evidence for a possible interaction between retinoid and G-protein signaling pathways. Functions as a negative modulator of EGFR signaling. Acts as a lung tumor suppressor. In Mus musculus (Mouse), this protein is Retinoic acid-induced protein 3 (Gprc5a).